The sequence spans 565 residues: MRQSKFFMPTLKEAPSDAVAKSHQLMLRGGYIRQVTAGVYAYLPLGYRVLRKAENIIEEEMNNINVPEMIMPHLLPATLWQESGRYKKYGAEMFKLQDRHGRESLLGPTHEETFTEIVAKNLKSYKQMPLALYQIQTKFRDENRPRFGLLRGREFVMLDGYSFAATREQLDEQFDDQKSAYLKIFNRAGVTVHPVIADSGTMGGKNSTEFQAPAAIGEDTIATNEKGTYAANLEMAKSIDTFKQDPEDAKELTKVATPGMDTIDKLAEFLKVPATRIVKSILYIADDQKVLVLIRGDKEINEVKLGHVLDADEVRTANADELVEITGSEKGGVGPIGADWADKIVADETVKGLYNVVVGANETDYQYQNANLDRDFKVDEFADIRTANEGELDPVDHLPLKFTTSIEVGHIFKLGTYYTKTMGADFLDNNGKAKPVIMGSYGIGVTRMLSAAVEQHLTENGIAWPKEIAPFDVHLIQMKMKDEAQTELAEKLEKELSTKYDVLYDDRNERPGVKFNDADLVGAPLRITIGRKAKDGIVEVKRPTDEKAMEVNISDLDAMITKELG.

Belongs to the class-II aminoacyl-tRNA synthetase family. ProS type 1 subfamily. As to quaternary structure, homodimer.

It localises to the cytoplasm. The catalysed reaction is tRNA(Pro) + L-proline + ATP = L-prolyl-tRNA(Pro) + AMP + diphosphate. In terms of biological role, catalyzes the attachment of proline to tRNA(Pro) in a two-step reaction: proline is first activated by ATP to form Pro-AMP and then transferred to the acceptor end of tRNA(Pro). As ProRS can inadvertently accommodate and process non-cognate amino acids such as alanine and cysteine, to avoid such errors it has two additional distinct editing activities against alanine. One activity is designated as 'pretransfer' editing and involves the tRNA(Pro)-independent hydrolysis of activated Ala-AMP. The other activity is designated 'posttransfer' editing and involves deacylation of mischarged Ala-tRNA(Pro). The misacylated Cys-tRNA(Pro) is not edited by ProRS. The polypeptide is Proline--tRNA ligase (Lactobacillus gasseri (strain ATCC 33323 / DSM 20243 / BCRC 14619 / CIP 102991 / JCM 1131 / KCTC 3163 / NCIMB 11718 / NCTC 13722 / AM63)).